Here is a 248-residue protein sequence, read N- to C-terminus: 3-deoxy-manno-octulosonate cytidylyltransferase (248 aa).

Belongs to the KdsB family.

The protein localises to the cytoplasm. It carries out the reaction 3-deoxy-alpha-D-manno-oct-2-ulosonate + CTP = CMP-3-deoxy-beta-D-manno-octulosonate + diphosphate. Its pathway is nucleotide-sugar biosynthesis; CMP-3-deoxy-D-manno-octulosonate biosynthesis; CMP-3-deoxy-D-manno-octulosonate from 3-deoxy-D-manno-octulosonate and CTP: step 1/1. It participates in bacterial outer membrane biogenesis; lipopolysaccharide biosynthesis. Functionally, activates KDO (a required 8-carbon sugar) for incorporation into bacterial lipopolysaccharide in Gram-negative bacteria. This chain is 3-deoxy-manno-octulosonate cytidylyltransferase, found in Salmonella typhi.